A 285-amino-acid polypeptide reads, in one-letter code: CCR4-NOT transcription complex subunit 7 (285 aa).

Residues Asp-40, Glu-42, Asp-161, Asp-230, and Glu-278 each coordinate a divalent metal cation.

It belongs to the CAF1 family. In terms of assembly, component of the CCR4-NOT complex. The cofactor is Mn(2+). Mg(2+) is required as a cofactor. It depends on Co(2+) as a cofactor.

It localises to the nucleus. The protein resides in the cytoplasm. It catalyses the reaction Exonucleolytic cleavage of poly(A) to 5'-AMP.. Its function is as follows. Has 3'-5' poly(A) exoribonuclease activity for synthetic poly(A) RNA substrate. Catalytic component of the CCR4-NOT complex which is one of the major cellular mRNA deadenylases and is linked to various cellular processes including bulk mRNA degradation, miRNA-mediated repression, translational repression during translational initiation and general transcription regulation. During miRNA-mediated repression the complex also seems to act as translational repressor during translational initiation. Additional complex functions may be a consequence of its influence on mRNA expression. The protein is CCR4-NOT transcription complex subunit 7 (cnot7) of Xenopus tropicalis (Western clawed frog).